A 127-amino-acid polypeptide reads, in one-letter code: Large ribosomal subunit protein bL12 (127 aa).

Residues 101-127 (VKTGVSKEEAEDAKKQLVESGAEVEIK) form a disordered region. A compositionally biased stretch (basic and acidic residues) spans 105-117 (VSKEEAEDAKKQL).

It belongs to the bacterial ribosomal protein bL12 family. Homodimer. Part of the ribosomal stalk of the 50S ribosomal subunit. Forms a multimeric L10(L12)X complex, where L10 forms an elongated spine to which 2 to 4 L12 dimers bind in a sequential fashion. Binds GTP-bound translation factors.

Forms part of the ribosomal stalk which helps the ribosome interact with GTP-bound translation factors. Is thus essential for accurate translation. In Geobacter metallireducens (strain ATCC 53774 / DSM 7210 / GS-15), this protein is Large ribosomal subunit protein bL12.